The chain runs to 1466 residues: MARLAAALWSLCVTTVLVTSATQGLSRAGLPFGLMRRELACEGYPIELRCPGSDVIMVENANYGRTDDKICDADPFQMENVQCYLPDAFKIMSQRCNNRTQCVVVAGSDAFPDPCPGTYKYLEVQYDCVPYIFVCPGTLQKVLEPTSTHESEHQSGAWCKDPLQAGDRIYVMPWIPYRTDTLTEYASWEDYVAARHTTTYRLPNRVDGTGFVVYDGAVFYNKERTRNIVKYDLRTRIKSGETVINTANYHDTSPYRWGGKTDIDLAVDENGLWVIYATEGNNGRLVVSQLNPYTLRFEGTWETGYDKRSASNAFMVCGVLYVLRSVYVDDDSEAAGNRVDYAFNTNANREEPVSLAFPNPYQFVSSVDYNPRDNQLYVWNNYFVVRYSLEFGPPDPSAGPATSPPLSTTTTARPTPLTSTASPAATTPLRRAPLTTHPVGAINQLGPDLPPATAPAPSTRRPPAPNLHVSPELFCEPREVRRVQWPATQQGMLVERPCPKGTRGIASFQCLPALGLWNPRGPDLSNCTSPWVNQVAQKIKSGENAANIASELARHTRGSIYAGDVSSSVKLMEQLLDILDAQLQALRPIERESAGKNYNKMHKRERTCKDYIKAVVETVDNLLRPEALESWKDMNATEQVHTATMLLDVLEEGAFLLADNVREPARFLAAKQNVVLEVTVLNTEGQVQELVFPQEYPSENSIQLSANTIKQNSRNGVVKVVFILYNNLGLFLSTENATVKLAGEAGTGGPGGASLVVNSQVIAASINKESSRVFLMDPVIFTVAHLEAKNHFNANCSFWNYSERSMLGYWSTQGCRLVESNKTHTTCACSHLTNFAVLMAHREIYQGRINELLLSVITWVGIVISLVCLAICISTFCFLRGLQTDRNTIHKNLCINLFLAELLFLVGIDKTQYEVACPIFAGLLHYFFLAAFSWLCLEGVHLYLLLVEVFESEYSRTKYYYLGGYCFPALVVGIAAAIDYRSYGTEKACWLRVDNYFIWSFIGPVSFVIVVNLVFLMVTLHKMIRSSSVLKPDSSRLDNIKSWALGAIALLFLLGLTWAFGLLFINKESVVMAYLFTTFNAFQGVFIFVFHCALQKKVHKEYSKCLRHSYCCIRSPPGGTHGSLKTSAMRSNTRYYTGTQSRIRRMWNDTVRKQTESSFMAGDINSTPTLNRGTMGNHLLTNPVLQPRGGTSPYNTLIAESVGFNPSSPPVFNSPGSYREPKHPLGGREACGMDTLPLNGNFNNSYSLRSGDFPPGDGGPEPPRGRNLADAAAFEKMIISELVHNNLRGASGGAKGPPPEPPVPPVPGVSEDEAGGPGSADRAEIELLYKALEEPLLLPRAQSVLYQSDLDESESCTAEDGATSRPLSSPPGRDSLYASGANLRDSPSYPDSSPEGPNEALPPPPPAPPGPPEIYYTSRPPALVARNPLQGYYQVRRPSHEGYLAAPSLEGPGPDGDGQMQLVTSL.

The N-terminal stretch at 1-28 (MARLAAALWSLCVTTVLVTSATQGLSRA) is a signal peptide. Residues 29 to 852 (GLPFGLMRRE…EIYQGRINEL (824 aa)) are Extracellular-facing. Residues 40–129 (ACEGYPIELR…KYLEVQYDCV (90 aa)) form the SUEL-type lectin domain. 5 disulfides stabilise this stretch: Cys41-Cys71, Cys50-Cys128, Cys83-Cys115, Cys96-Cys102, and Cys135-Cys317. Residue Glu42 coordinates alpha-L-rhamnose. N-linked (GlcNAc...) asparagine glycosylation occurs at Asn98. An alpha-L-rhamnose-binding site is contributed by 117–120 (GTYK). The region spanning 134 to 393 (VCPGTLQKVL…VVRYSLEFGP (260 aa)) is the Olfactomedin-like domain. Residues 395–463 (DPSAGPATSP…APAPSTRRPP (69 aa)) form a disordered region. Residues 400 to 436 (PATSPPLSTTTTARPTPLTSTASPAATTPLRRAPLTT) show a composition bias toward low complexity. Positions 448–463 (DLPPATAPAPSTRRPP) are enriched in pro residues. Disulfide bonds link Cys475/Cys510 and Cys498/Cys527. 6 N-linked (GlcNAc...) asparagine glycosylation sites follow: Asn526, Asn635, Asn736, Asn795, Asn800, and Asn821. The 182-residue stretch at 664-845 (PARFLAAKQN…AVLMAHREIY (182 aa)) folds into the GAIN-B domain. Intrachain disulfides connect Cys796/Cys827 and Cys815/Cys829. Residues 796–845 (CSFWNYSERSMLGYWSTQGCRLVESNKTHTTCACSHLTNFAVLMAHREIY) are GPS. The chain crosses the membrane as a helical span at residues 853 to 873 (LLSVITWVGIVISLVCLAICI). At 874–887 (STFCFLRGLQTDRN) the chain is on the cytoplasmic side. Residues 888 to 908 (TIHKNLCINLFLAELLFLVGI) traverse the membrane as a helical segment. The Extracellular portion of the chain corresponds to 909–914 (DKTQYE). A helical membrane pass occupies residues 915 to 935 (VACPIFAGLLHYFFLAAFSWL). Residues 936–958 (CLEGVHLYLLLVEVFESEYSRTK) are Cytoplasmic-facing. Residues 959–979 (YYYLGGYCFPALVVGIAAAID) traverse the membrane as a helical segment. Residues 980-996 (YRSYGTEKACWLRVDNY) lie on the Extracellular side of the membrane. Residues 997 to 1017 (FIWSFIGPVSFVIVVNLVFLM) form a helical membrane-spanning segment. The Cytoplasmic portion of the chain corresponds to 1018–1044 (VTLHKMIRSSSVLKPDSSRLDNIKSWA). The chain crosses the membrane as a helical span at residues 1045–1065 (LGAIALLFLLGLTWAFGLLFI). Residues 1066-1069 (NKES) are Extracellular-facing. A helical transmembrane segment spans residues 1070–1090 (VVMAYLFTTFNAFQGVFIFVF). Residues 1091 to 1466 (HCALQKKVHK…DGQMQLVTSL (376 aa)) are Cytoplasmic-facing. Arg1188 carries the post-translational modification Omega-N-methylarginine. Phosphoserine is present on Ser1214. Disordered stretches follow at residues 1242–1267 (FNNS…RGRN), 1288–1319 (RGAS…GPGS), 1352–1421 (ESES…SRPP), and 1443–1466 (YLAA…VTSL). Positions 1296–1307 (GPPPEPPVPPVP) are enriched in pro residues. Phosphoserine is present on Ser1319. Residues 1400–1412 (ALPPPPPAPPGPP) show a composition bias toward pro residues. Ser1448 and Ser1465 each carry phosphoserine.

Belongs to the G-protein coupled receptor 2 family. Adhesion G-protein coupled receptor (ADGR) subfamily. In terms of assembly, forms a heterodimer, consisting of a large extracellular region (p120) non-covalently linked to a seven-transmembrane moiety (p85). Interacts with syntaxin and with proteins of the SHANK family via the PDZ domain. Interacts (via extracellular domain) with FLRT1, FLRT2 and FLRT3 (via extracellular domain). Post-translationally, autoproteolytically cleaved into 2 subunits, an extracellular subunit and a seven-transmembrane subunit. This proteolytic processing takes place early in the biosynthetic pathway, either in the endoplasmic reticulum or in the early compartment of the Golgi apparatus.

Its subcellular location is the cell membrane. It localises to the cell projection. The protein localises to the axon. It is found in the growth cone. The protein resides in the synapse. Its subcellular location is the presynaptic cell membrane. It localises to the synaptosome. In terms of biological role, calcium-independent receptor of high affinity for alpha-latrotoxin, an excitatory neurotoxin present in black widow spider venom which triggers massive exocytosis from neurons and neuroendocrine cells. Receptor for TENM2 that mediates heterophilic synaptic cell-cell contact and postsynaptic specialization. Receptor probably implicated in the regulation of exocytosis. The chain is Adhesion G protein-coupled receptor L1 from Mus musculus (Mouse).